We begin with the raw amino-acid sequence, 311 residues long: N-acetylmuramic acid 6-phosphate etherase (311 aa).

Residues 66–229 (VADRMARGGR…STITMIRLGK (164 aa)) enclose the SIS domain. E94 (proton donor) is an active-site residue. E125 is an active-site residue.

This sequence belongs to the GCKR-like family. MurNAc-6-P etherase subfamily. Homodimer.

It carries out the reaction N-acetyl-D-muramate 6-phosphate + H2O = N-acetyl-D-glucosamine 6-phosphate + (R)-lactate. It participates in amino-sugar metabolism; N-acetylmuramate degradation. Specifically catalyzes the cleavage of the D-lactyl ether substituent of MurNAc 6-phosphate, producing GlcNAc 6-phosphate and D-lactate. The protein is N-acetylmuramic acid 6-phosphate etherase of Streptomyces avermitilis (strain ATCC 31267 / DSM 46492 / JCM 5070 / NBRC 14893 / NCIMB 12804 / NRRL 8165 / MA-4680).